We begin with the raw amino-acid sequence, 1516 residues long: UDP-glucose:glycoprotein glucosyltransferase 2 (1516 aa).

Positions 1–27 (MAPAKATNVVRLLLGSTALWLSQLGSG) are cleaved as a signal peptide. Residues Asn-256, Asn-286, Asn-920, and Asn-950 are each glycosylated (N-linked (GlcNAc...) asparagine). The interval 1220 to 1516 (LHKENKKEKD…QDTILTHDEL (297 aa)) is glucosyltransferase. The residue at position 1289 (Tyr-1289) is a Phosphotyrosine. The Prevents secretion from ER signature appears at 1513–1516 (HDEL).

This sequence belongs to the glycosyltransferase 8 family. In terms of assembly, interacts with METTL23. Interacts with SELENOF. Ca(2+) is required as a cofactor. The cofactor is Mn(2+). As to expression, higher levels in kidney, pancreas, heart, and skeletal muscle.

It is found in the endoplasmic reticulum lumen. It localises to the endoplasmic reticulum-Golgi intermediate compartment. The enzyme catalyses N(4)-(alpha-D-Man-(1-&gt;2)-alpha-D-Man-(1-&gt;2)-alpha-D-Man-(1-&gt;3)-[alpha-D-Man-(1-&gt;2)-alpha-D-Man-(1-&gt;3)-[alpha-D-Man-(1-&gt;2)-alpha-D-Man-(1-&gt;6)]-alpha-D-Man-(1-&gt;6)]-beta-D-Man-(1-&gt;4)-beta-D-GlcNAc-(1-&gt;4)-beta-D-GlcNAc)-L-asparaginyl-[protein] (N-glucan mannose isomer 9A1,2,3B1,2,3) + UDP-alpha-D-glucose = N(4)-(alpha-D-Glc-(1-&gt;3)-alpha-D-Man-(1-&gt;2)-alpha-D-Man-(1-&gt;2)-alpha-D-Man-(1-&gt;3)-[alpha-D-Man-(1-&gt;2)-alpha-D-Man-(1-&gt;3)-[alpha-D-Man-(1-&gt;2)-alpha-D-Man-(1-&gt;6)]-alpha-D-Man-(1-&gt;6)]-beta-D-Man-(1-&gt;4)-beta-D-GlcNAc-(1-&gt;4)-beta-D-GlcNAc)-L-asparaginyl-[protein] + UDP + H(+). It participates in protein modification; protein glycosylation. Its activity is regulated as follows. Ethylenediaminetetraacetic acid completely abolishes catalytic activity. Catalytic activity is enhanced by complex formation with SELENOF. Recognizes glycoproteins with minor folding defects. Reglucosylates single N-glycans near the misfolded part of the protein, thus providing quality control for protein folding in the endoplasmic reticulum. Reglucosylated proteins are recognized by calreticulin for recycling to the endoplasmic reticulum and refolding or degradation. The chain is UDP-glucose:glycoprotein glucosyltransferase 2 (UGGT2) from Homo sapiens (Human).